The chain runs to 697 residues: MAGQAGQAAQRVAALRNEIEQHNVRYYVHDDPSVSDAEYDALMRELIQLETDHPELVTPESPTQRVGAAPLAAFGSVRHAVPMLSLGNAFDPDEVQAFDRRVGDTLRGAGLLRVDQQPEYFCELKLDGLAISLRYEDGVLVQAATRGDGQTGEDVTANVRTIRAVPLRLKGAAPRVLEVRGEVLMNRAEFDRLNRSQAARDEKVFVNPRNAAAGSLRQLDPRITAQRPLRFFAYSWGEVHGLPGRQTALFDEPAPGAREESTLPRDTHGAMLDWLAELGLPVNTRHNRRAVGAEGLLAFYEQVGRERPGLPYDIDGVVYKVNSLPAQKVLGFVARAPRFALAHKFPAEEATTRLLDIEVQVGRTGAITPVARLQPVFVGGVTVTNATLHNEDEVRRKDVRIGDTVTVRRAGDVIPEVVGPVPGKRPADAREFVMPVSCPVCGSAIERPEDEAIARCTGGLFCAAQRKQTLLHAAGRKALDIDGLGEKLIDQLVDSGRVKSLADLYSLNAFELAALERMGKKSADNLVAAIDRARTPSLGRLLFALGIRHVGETTARDVARHFGSIETIMDADEEALAGAPDVGPVVAGSIRRFFAEPHNREIIDLLKAQGVHPVPEAGPQGNTLAGKTFVLTGTMPNWTRDEATRHILAAGGKVSGSVSKKTAYVVAGEEAGSKLAKAQELGVTVLDEDGLKALLGV.

NAD(+) contacts are provided by residues 36-40, 85-86, and Glu-123; these read DAEYD and SL. Lys-125 functions as the N6-AMP-lysine intermediate in the catalytic mechanism. 4 residues coordinate NAD(+): Arg-146, Glu-182, Lys-320, and Lys-344. Cys-438, Cys-441, Cys-456, and Cys-462 together coordinate Zn(2+). Residues 619–697 form the BRCT domain; sequence PQGNTLAGKT…EDGLKALLGV (79 aa).

This sequence belongs to the NAD-dependent DNA ligase family. LigA subfamily. The cofactor is Mg(2+). Mn(2+) serves as cofactor.

It catalyses the reaction NAD(+) + (deoxyribonucleotide)n-3'-hydroxyl + 5'-phospho-(deoxyribonucleotide)m = (deoxyribonucleotide)n+m + AMP + beta-nicotinamide D-nucleotide.. In terms of biological role, DNA ligase that catalyzes the formation of phosphodiester linkages between 5'-phosphoryl and 3'-hydroxyl groups in double-stranded DNA using NAD as a coenzyme and as the energy source for the reaction. It is essential for DNA replication and repair of damaged DNA. This is DNA ligase from Bordetella petrii (strain ATCC BAA-461 / DSM 12804 / CCUG 43448).